A 170-amino-acid polypeptide reads, in one-letter code: Myelin-associated oligodendrocyte basic protein (170 aa).

Residues 69-170 are disordered; that stretch reads SRRATSPQKP…GSPTRAPRFW (102 aa). A compositionally biased stretch (low complexity) spans 82–92; that stretch reads PAASPVVVRAP. Residues Ser85, Ser98, and Ser107 each carry the phosphoserine modification. Copy 1 of the repeat occupies 93–101; the sequence is PAKPKSPPR. The span at 93-114 shows a compositional bias: pro residues; it reads PAKPKSPPRPAKPRSPPIPAKP. A 3 X 9 AA approximate tandem repeats region spans residues 93–119; sequence PAKPKSPPRPAKPRSPPIPAKPRSPSR. The stretch at 105–110 is one 2; half-length repeat; the sequence is PRSPPI. Repeat unit 3 spans residues 111-119; sequence PAKPRSPSR. Residues 118–130 are compositionally biased toward basic and acidic residues; the sequence is SRTERQPRPRPEV. Residues 138–151 show a composition bias toward low complexity; that stretch reads KPPQKSKQPARSSP.

Expressed predominantly in oligodendrocytes, in CNS myelin of the cerebrum and spinal cord. No expression seen in sciatic nerve.

The protein resides in the cytoplasm. It is found in the perinuclear region. May play a role in compacting or stabilizing the myelin sheath, possibly by binding the negatively charged acidic phospholipids of the cytoplasmic membrane. The polypeptide is Myelin-associated oligodendrocyte basic protein (Mobp) (Rattus norvegicus (Rat)).